The primary structure comprises 385 residues: uncharacterized protein (385 aa).

This is an uncharacterized protein from Caenorhabditis elegans.